The chain runs to 745 residues: Polyribonucleotide nucleotidyltransferase (745 aa).

Mg(2+)-binding residues include Asp487 and Asp493. The 60-residue stretch at 554 to 613 (PSSTTVKIDKDKIKDIIGPGGKIIKEICETSNAKIDISDDGTVSIYASDRDKIKIALDKI) folds into the KH domain. An S1 motif domain is found at 623-691 (GEIFNGTVMK…NKGKAKLTIK (69 aa)). The interval 693–732 (AYKDHSSNNTKQKNNVKDDSESEQRRDTSKKRTWNEDNNT) is disordered. Positions 707-719 (NVKDDSESEQRRD) are enriched in basic and acidic residues.

It belongs to the polyribonucleotide nucleotidyltransferase family. Requires Mg(2+) as cofactor.

The protein resides in the cytoplasm. It catalyses the reaction RNA(n+1) + phosphate = RNA(n) + a ribonucleoside 5'-diphosphate. Its function is as follows. Involved in mRNA degradation. Catalyzes the phosphorolysis of single-stranded polyribonucleotides processively in the 3'- to 5'-direction. This Rickettsia prowazekii (strain Madrid E) protein is Polyribonucleotide nucleotidyltransferase.